The chain runs to 319 residues: Cytochrome c biogenesis protein CcsA (319 aa).

A run of 7 helical transmembrane segments spans residues isoleucine 9–leucine 29, glycine 44–glycine 64, leucine 71–leucine 91, methionine 143–isoleucine 163, isoleucine 225–asparagine 245, threonine 259–histidine 273, and alanine 286–leucine 306.

Belongs to the CcmF/CycK/Ccl1/NrfE/CcsA family. In terms of assembly, may interact with Ccs1.

It localises to the plastid. The protein resides in the chloroplast thylakoid membrane. Required during biogenesis of c-type cytochromes (cytochrome c6 and cytochrome f) at the step of heme attachment. This Oenothera parviflora (Small-flowered evening primrose) protein is Cytochrome c biogenesis protein CcsA.